Consider the following 277-residue polypeptide: 14-3-3 protein (277 aa).

Residues 252 to 277 (LQTQEQQQQPVGEGAEAPKVEATEQQ) form a disordered region. Basic and acidic residues predominate over residues 267-277 (EAPKVEATEQQ).

Belongs to the 14-3-3 family.

The chain is 14-3-3 protein from Eimeria tenella (Coccidian parasite).